The sequence spans 375 residues: Meiotic driver cw27 (375 aa).

Disordered stretches follow at residues 1-42 (MKNK…STLP) and 74-103 (DYDENRLLITDEGNNPPNTHRENHSSGTTD). Residues 11 to 29 (SMDELSTKNDNEIDLEKGP) show a composition bias toward basic and acidic residues. The next 7 helical transmembrane spans lie at 108 to 128 (FLIKLLISFTSIILFNAPAVC), 145 to 165 (WTLIGFWCASSLIIFTFSWCF), 172 to 192 (AVKVTVIFLAQCIKVTAISLA), 208 to 228 (EMMIIIWILWLIICCILFGCV), 245 to 265 (TISAVLFLIVSSVCIPIWTLW), 272 to 292 (LQVLGIHGIIALLVNGLMSLF), and 336 to 356 (VIGFILGGIANAIGGIANAIG).

The protein belongs to the WTF family. Homomer. Forms protein aggregates. The two isoforms can interact with each other and with themselves. High sequence similarity is required for their interaction.

Its subcellular location is the spore membrane. The protein localises to the vacuole. The protein resides in the membrane. It is found in the ascus epiplasm. It localises to the cytoplasm. Its subcellular location is the endoplasmic reticulum. Functionally, promotes unequal transmission of alleles from the parental zygote to progeny spores by acting as poison/antidote system where the poison and antidote proteins are produced from the same locus; the poison component is trans-acting and targets all spores within an ascus whereas the antidote component is spore-specific, leading to poisoning of all progeny that do not inherit the allele. In terms of biological role, localizes isoform 2 to the vacuole thereby facilitating its degradation. Its function is as follows. Forms toxic aggregates that disrupt spore maturation. This is Meiotic driver cw27 from Schizosaccharomyces pombe (Fission yeast).